We begin with the raw amino-acid sequence, 124 residues long: Small ribosomal subunit protein uS12 (124 aa).

At D89 the chain carries 3-methylthioaspartic acid. The tract at residues D103–S124 is disordered. Positions Q108–S124 are enriched in basic residues.

Belongs to the universal ribosomal protein uS12 family. In terms of assembly, part of the 30S ribosomal subunit. Contacts proteins S8 and S17. May interact with IF1 in the 30S initiation complex.

Its function is as follows. With S4 and S5 plays an important role in translational accuracy. Functionally, interacts with and stabilizes bases of the 16S rRNA that are involved in tRNA selection in the A site and with the mRNA backbone. Located at the interface of the 30S and 50S subunits, it traverses the body of the 30S subunit contacting proteins on the other side and probably holding the rRNA structure together. The combined cluster of proteins S8, S12 and S17 appears to hold together the shoulder and platform of the 30S subunit. The polypeptide is Small ribosomal subunit protein uS12 (Methylococcus capsulatus (strain ATCC 33009 / NCIMB 11132 / Bath)).